The chain runs to 688 residues: Methionine--tRNA ligase (688 aa).

The 'HIGH' region signature appears at 13–23 (PYANGQIHIGH). The Zn(2+) site is built by C144, C147, C157, and C160. The short motif at 335 to 339 (KMSKS) is the 'KMSKS' region element. K338 provides a ligand contact to ATP. The tRNA-binding domain maps to 582-688 (DFAKIDLRVA…SGAVPGMRIG (107 aa)).

This sequence belongs to the class-I aminoacyl-tRNA synthetase family. MetG type 1 subfamily. Homodimer. The cofactor is Zn(2+).

Its subcellular location is the cytoplasm. The enzyme catalyses tRNA(Met) + L-methionine + ATP = L-methionyl-tRNA(Met) + AMP + diphosphate. Is required not only for elongation of protein synthesis but also for the initiation of all mRNA translation through initiator tRNA(fMet) aminoacylation. This is Methionine--tRNA ligase from Cupriavidus pinatubonensis (strain JMP 134 / LMG 1197) (Cupriavidus necator (strain JMP 134)).